Reading from the N-terminus, the 299-residue chain is Regucalcin (299 aa).

Residue Glu-18 participates in a divalent metal cation binding. Substrate-binding residues include Arg-101, Asn-103, and Glu-121. Asn-154 and Asp-204 together coordinate a divalent metal cation. Catalysis depends on Asp-204, which acts as the Proton donor/acceptor. N6-succinyllysine is present on residues Lys-244 and Lys-253.

Belongs to the SMP-30/CGR1 family. In terms of assembly, monomer. Requires Zn(2+) as cofactor. The cofactor is Mn(2+). It depends on Ca(2+) as a cofactor. Mg(2+) serves as cofactor.

It is found in the cytoplasm. It catalyses the reaction D-glucono-1,5-lactone + H2O = D-gluconate + H(+). The protein operates within cofactor biosynthesis; L-ascorbate biosynthesis via UDP-alpha-D-glucuronate pathway; L-ascorbate from UDP-alpha-D-glucuronate: step 3/4. Gluconolactonase with low activity towards other sugar lactones, including gulonolactone and galactonolactone. Catalyzes a key step in ascorbic acid (vitamin C) biosynthesis. Can also hydrolyze diisopropyl phosphorofluoridate and phenylacetate (in vitro). Calcium-binding protein. Modulates Ca(2+) signaling, and Ca(2+)-dependent cellular processes and enzyme activities. This chain is Regucalcin (RGN), found in Sus scrofa (Pig).